The chain runs to 78 residues: Delta-conotoxin TxVIA (78 aa).

An N-terminal signal peptide occupies residues 1–22; sequence MKLTCMMIVAVLFLTAWTFATA. A propeptide spanning residues 23 to 49 is cleaved from the precursor; sequence DDPRNGLGNLFSNAHHEMKNPEASKLN. Intrachain disulfides connect Cys-53-Cys-68, Cys-60-Cys-72, and Cys-67-Cys-77. The residue at position 59 (Met-59) is a Methionine sulfoxide; partial.

This sequence belongs to the conotoxin O1 superfamily. In terms of tissue distribution, expressed by the venom duct.

Its subcellular location is the secreted. In terms of biological role, delta-conotoxins bind to site 6 of voltage-gated sodium channels (Nav) and inhibit the inactivation process. Binding of this toxin is strongly calcium-dependent but not voltage-dependent. The binding site is most likely on the extracellular side of the sodium channel. Binds receptor sites on both mollusk and rat central nervous system, but despite its high affinity binding to rat sodium channel, it has no functional effect in vivo and in vitro on it. Also has no effect on Gambusia fish. Is important in mollusk for the paralysis of the prey. Upon injection of the peptide, a subordinate lobster assumes an exaggerated dominant posture (of a 'King-Kong' lobster!). The polypeptide is Delta-conotoxin TxVIA (Conus textile (Cloth-of-gold cone)).